Consider the following 189-residue polypeptide: Elongation factor P (189 aa).

The protein belongs to the elongation factor P family.

The protein resides in the cytoplasm. Its pathway is protein biosynthesis; polypeptide chain elongation. Functionally, involved in peptide bond synthesis. Stimulates efficient translation and peptide-bond synthesis on native or reconstituted 70S ribosomes in vitro. Probably functions indirectly by altering the affinity of the ribosome for aminoacyl-tRNA, thus increasing their reactivity as acceptors for peptidyl transferase. This is Elongation factor P from Onion yellows phytoplasma (strain OY-M).